A 287-amino-acid polypeptide reads, in one-letter code: Undecaprenyl-diphosphatase (287 aa).

Helical transmembrane passes span 6–26 (LHLLKAFFLGIVEGLTEFIPV), 45–65 (SGKVFEVVIQFGSILAVMWIF), 89–109 (NLLLAFLPAAVIGAIFIKSIK), 111–131 (VFYHPGVVAVTLVVGGFIMLW), 204–224 (ATEFSFFLAMPTMLGAAVYDL), 238–258 (AIAVGFVAAFLSALVVVRAVL), and 266–286 (YRVFAWYRIALGLVVAAWIYA).

Belongs to the UppP family.

The protein resides in the cell inner membrane. The catalysed reaction is di-trans,octa-cis-undecaprenyl diphosphate + H2O = di-trans,octa-cis-undecaprenyl phosphate + phosphate + H(+). In terms of biological role, catalyzes the dephosphorylation of undecaprenyl diphosphate (UPP). Confers resistance to bacitracin. This is Undecaprenyl-diphosphatase from Bordetella pertussis (strain Tohama I / ATCC BAA-589 / NCTC 13251).